Consider the following 888-residue polypeptide: Collagen alpha chain (888 aa).

The disordered stretch occupies residues 1-627 (APGPDGLTGT…GPPGQPGMSE (627 aa)). A Collagen-like 1 domain is found at 3-60 (GPDGLTGTKGSMGEPGTDGEPGSPGPQGAKGETGLAGRRGLTGIPGKQGRQGERGEPG). Composition is skewed to low complexity over residues 59 to 73 (PGTAGSQGQQGQPGT) and 148 to 164 (TPGLPGMPGQQGPMGPI). Residues 179 to 190 (RGYDGKDGEPGR) show a composition bias toward basic and acidic residues. Residues 194-203 (PGPIGQPGIP) show a composition bias toward low complexity. The segment covering 311–320 (SGPPGPPGPS) has biased composition (pro residues). The span at 422-440 (SGSRGAQGPPGAPGSSGQN) shows a compositional bias: low complexity. Residues 441 to 450 (GVDGGTGENG) show a composition bias toward gly residues. 2 stretches are compositionally biased toward low complexity: residues 460–475 (ESGAPGDPGASGSAGP) and 508–518 (EPGPQGDQGPK). The 59-residue stretch at 513-571 (GDQGPKGQKGEVGPVGEKGDKGWTGTPGDPGPQGDRGEPGPPGRDGVDGPPGPRGAPGE) folds into the Collagen-like 2 domain. A compositionally biased stretch (pro residues) spans 610–622 (PPGPPGPPGPPGQ). The Fibrillar collagen NC1 domain occupies 661 to 884 (ENVLKDLDEK…KLEIGPACFH (224 aa)). Cystine bridges form between C731-C882 and C793-C833.

It belongs to the fibrillar collagen family. Component of the acid-insoluble organic matrix of the aragonitic skeleton (at protein level).

It localises to the secreted. The chain is Collagen alpha chain from Acropora millepora (Staghorn coral).